A 388-amino-acid chain; its full sequence is Flavin-dependent monooxygenase (388 aa).

R54 is an NADPH binding site. The FAD site is built by D61, R117, and D311.

This sequence belongs to the aromatic-ring hydroxylase family. TetX subfamily. In terms of assembly, monomer. It depends on FAD as a cofactor.

It localises to the cytoplasm. The catalysed reaction is a tetracycline + NADPH + O2 + H(+) = an 11a-hydroxytetracycline + NADP(+) + H2O. It catalyses the reaction tetracycline + NADPH + O2 + H(+) = 11a-hydroxytetracycline + NADP(+) + H2O. The enzyme catalyses oxytetracycline + NADPH + O2 + H(+) = 11a-hydroxy-oxytetracycline + NADP(+) + H2O. An FAD-requiring monooxygenase active on some tetracycline antibiotic derivatives, which leads to their inactivation. Hydroxylates carbon 11a of tetracycline and some analogs. Its function is as follows. Confers resistance to tetracycline via an oxidoreductase activity; NADPH is more active than NAD. Expression in E.coli leads to breakdown of tetracycline. Confers resistance to doxycycline, chlortetracycline, oxytetracycline and minocycline. This is Flavin-dependent monooxygenase from Bacteroides fragilis.